Here is a 504-residue protein sequence, read N- to C-terminus: Maturase K (504 aa).

The protein belongs to the intron maturase 2 family. MatK subfamily.

The protein resides in the plastid. Its subcellular location is the chloroplast. Usually encoded in the trnK tRNA gene intron. Probably assists in splicing its own and other chloroplast group II introns. The chain is Maturase K from Pachira aquatica (Guiana chestnut).